Here is a 745-residue protein sequence, read N- to C-terminus: DEAD-box ATP-dependent RNA helicase 3A, chloroplastic (745 aa).

A chloroplast-targeting transit peptide spans 1–41 (MASLVTLPAIAFSNPATASGAVRLRAAAFRCWALRRRGWAV). Residues 88 to 116 (LAIARLGLPDELVATLEKRGITHLFPIQR) carry the Q motif motif. The region spanning 119–295 (LIPALGGRDL…RRYLNNPLTI (177 aa)) is the Helicase ATP-binding domain. 132–139 (AKTGTGKT) provides a ligand contact to ATP. A DEAD box motif is present at residues 243–246 (DEAD). Positions 324–469 (ILSDLITVYA…ISPPSIEEVL (146 aa)) constitute a Helicase C-terminal domain. The interval 606-724 (LTKISKLPAL…SLGGRESSRS (119 aa)) is disordered. Over residues 641–650 (GGGASRGRGG) the composition is skewed to gly residues. Residues 656–670 (EDRYRRGGRSLRSDN) are compositionally biased toward basic and acidic residues. Residues 687-724 (RSSSSFGGRSSSYGSRGSPSPSFGVRSSSLGGRESSRS) are compositionally biased toward low complexity. The segment at 727–744 (GACFNCGESGHRASDCPN) adopts a CCHC-type zinc-finger fold.

The protein belongs to the DEAD box helicase family. DDX21/DDX50 subfamily.

Its subcellular location is the plastid. The protein localises to the chloroplast. The enzyme catalyses ATP + H2O = ADP + phosphate + H(+). Its function is as follows. Nuclear genome-encoded factor involved in ribosome biogenesis in chloroplasts. Binds specific group II introns in chloroplasts and facilitates their splicing. Required for normal development of chloroplasts. The polypeptide is DEAD-box ATP-dependent RNA helicase 3A, chloroplastic (Zea mays (Maize)).